The sequence spans 278 residues: tRNA pseudouridine synthase A (278 aa).

Asp61 (nucleophile) is an active-site residue. Tyr119 is a substrate binding site.

The protein belongs to the tRNA pseudouridine synthase TruA family. As to quaternary structure, homodimer.

It carries out the reaction uridine(38/39/40) in tRNA = pseudouridine(38/39/40) in tRNA. In terms of biological role, formation of pseudouridine at positions 38, 39 and 40 in the anticodon stem and loop of transfer RNAs. The polypeptide is tRNA pseudouridine synthase A (Oleidesulfovibrio alaskensis (strain ATCC BAA-1058 / DSM 17464 / G20) (Desulfovibrio alaskensis)).